The sequence spans 234 residues: tRNA (guanine-N(1)-)-methyltransferase (234 aa).

S-adenosyl-L-methionine contacts are provided by residues glycine 110 and 134–139; that span reads IGDYVL.

Belongs to the RNA methyltransferase TrmD family. Homodimer.

Its subcellular location is the cytoplasm. It carries out the reaction guanosine(37) in tRNA + S-adenosyl-L-methionine = N(1)-methylguanosine(37) in tRNA + S-adenosyl-L-homocysteine + H(+). Specifically methylates guanosine-37 in various tRNAs. This is tRNA (guanine-N(1)-)-methyltransferase from Tropheryma whipplei (strain Twist) (Whipple's bacillus).